A 334-amino-acid polypeptide reads, in one-letter code: Probable N5-carboxyaminoimidazole ribonucleotide mutase (334 aa).

The substrate site is built by serine 11, aspartate 14, and arginine 41.

Belongs to the AIR carboxylase family. Class I subfamily.

It catalyses the reaction 5-carboxyamino-1-(5-phospho-D-ribosyl)imidazole + H(+) = 5-amino-1-(5-phospho-D-ribosyl)imidazole-4-carboxylate. It functions in the pathway purine metabolism; IMP biosynthesis via de novo pathway; 5-amino-1-(5-phospho-D-ribosyl)imidazole-4-carboxylate from 5-amino-1-(5-phospho-D-ribosyl)imidazole (N5-CAIR route): step 2/2. In terms of biological role, catalyzes the conversion of N5-carboxyaminoimidazole ribonucleotide (N5-CAIR) to 4-carboxy-5-aminoimidazole ribonucleotide (CAIR). This Methanothermobacter thermautotrophicus (strain ATCC 29096 / DSM 1053 / JCM 10044 / NBRC 100330 / Delta H) (Methanobacterium thermoautotrophicum) protein is Probable N5-carboxyaminoimidazole ribonucleotide mutase.